The primary structure comprises 310 residues: Leucine carboxyl methyltransferase 1 (310 aa).

Residues Arg50, Gly75, Asp100, Asp145–Ile146, and Glu169 contribute to the S-adenosyl-L-methionine site.

This sequence belongs to the methyltransferase superfamily. LCMT family.

The catalysed reaction is [phosphatase 2A protein]-C-terminal L-leucine + S-adenosyl-L-methionine = [phosphatase 2A protein]-C-terminal L-leucine methyl ester + S-adenosyl-L-homocysteine. Functionally, methylates the carboxyl group of the C-terminal leucine residue of protein phosphatase 2A catalytic subunits to form alpha-leucine ester residues. The polypeptide is Leucine carboxyl methyltransferase 1 (ppm1) (Schizosaccharomyces pombe (strain 972 / ATCC 24843) (Fission yeast)).